The following is a 446-amino-acid chain: Amino-acid acetyltransferase (446 aa).

The region spanning 299 to 438 is the N-acetyltransferase domain; sequence EQVRDAEIDD…QKLYNFQRKS (140 aa).

Belongs to the acetyltransferase family. ArgA subfamily.

It is found in the cytoplasm. The enzyme catalyses L-glutamate + acetyl-CoA = N-acetyl-L-glutamate + CoA + H(+). The protein operates within amino-acid biosynthesis; L-arginine biosynthesis; N(2)-acetyl-L-ornithine from L-glutamate: step 1/4. In Aliivibrio fischeri (strain ATCC 700601 / ES114) (Vibrio fischeri), this protein is Amino-acid acetyltransferase.